Here is a 376-residue protein sequence, read N- to C-terminus: Protein-tyrosine sulfotransferase 2 (376 aa).

At 1 to 8 (MRLSVRKV) the chain is on the cytoplasmic side. Residues 9–25 (LLAAGCALALVLAVQLG) form a helical; Signal-anchor for type II membrane protein membrane-spanning segment. Topologically, residues 26-376 (QQVLECRAVL…NSTSPHLGSS (351 aa)) are lumenal. 77–81 (RSGTT) contributes to the 3'-phosphoadenylyl sulfate binding site. A disulfide bridge connects residues Cys95 and Cys155. The Proton donor/acceptor role is filled by Glu98. An interaction with peptide substrate region spans residues 100–104 (RIIPR). 3'-phosphoadenylyl sulfate contacts are provided by Arg182, Ser190, and Arg194. Cys224 and Cys232 are joined by a disulfide. 3'-phosphoadenylyl sulfate-binding positions include Tyr237, 284-293 (STDQVIKPVN), and Lys299. N-linked (GlcNAc...) asparagine glycosylation is found at Asn342 and Asn367.

It belongs to the protein sulfotransferase family. As to quaternary structure, homodimer. Can also form heterodimers with TPST1. N-glycosylated. In terms of tissue distribution, widely expressed.

Its subcellular location is the golgi apparatus membrane. It carries out the reaction L-tyrosyl-[protein] + 3'-phosphoadenylyl sulfate = O-sulfo-L-tyrosine-[protein] + adenosine 3',5'-bisphosphate + H(+). Functionally, catalyzes the O-sulfation of tyrosine residues within acidic motifs of polypeptides, using 3'-phosphoadenylyl sulfate (PAPS) as cosubstrate. The chain is Protein-tyrosine sulfotransferase 2 (Tpst2) from Mus musculus (Mouse).